Reading from the N-terminus, the 338-residue chain is Ketol-acid reductoisomerase (NADP(+)) (338 aa).

The 181-residue stretch at 1 to 181 (MKVFYDKDCD…GGGRTGIIET (181 aa)) folds into the KARI N-terminal Rossmann domain. NADP(+) contacts are provided by residues 24-27 (YGSQ), Arg47, Ser50, Thr52, and 82-85 (DEFQ). His107 is an active-site residue. Residue Gly133 participates in NADP(+) binding. The region spanning 182 to 327 (TFKDETETDL…EQLRSMMPWI (146 aa)) is the KARI C-terminal knotted domain. Mg(2+)-binding residues include Asp190, Glu194, Glu226, and Glu230. A substrate-binding site is contributed by Ser251.

Belongs to the ketol-acid reductoisomerase family. Mg(2+) serves as cofactor.

It catalyses the reaction (2R)-2,3-dihydroxy-3-methylbutanoate + NADP(+) = (2S)-2-acetolactate + NADPH + H(+). The enzyme catalyses (2R,3R)-2,3-dihydroxy-3-methylpentanoate + NADP(+) = (S)-2-ethyl-2-hydroxy-3-oxobutanoate + NADPH + H(+). Its pathway is amino-acid biosynthesis; L-isoleucine biosynthesis; L-isoleucine from 2-oxobutanoate: step 2/4. It participates in amino-acid biosynthesis; L-valine biosynthesis; L-valine from pyruvate: step 2/4. Its function is as follows. Involved in the biosynthesis of branched-chain amino acids (BCAA). Catalyzes an alkyl-migration followed by a ketol-acid reduction of (S)-2-acetolactate (S2AL) to yield (R)-2,3-dihydroxy-isovalerate. In the isomerase reaction, S2AL is rearranged via a Mg-dependent methyl migration to produce 3-hydroxy-3-methyl-2-ketobutyrate (HMKB). In the reductase reaction, this 2-ketoacid undergoes a metal-dependent reduction by NADPH to yield (R)-2,3-dihydroxy-isovalerate. The polypeptide is Ketol-acid reductoisomerase (NADP(+)) (Pseudomonas putida (strain W619)).